The primary structure comprises 447 residues: Argininosuccinate synthase (447 aa).

Residues 20–28 (AFSGGLDTS) and Ala-46 each bind ATP. Tyr-102 is a binding site for L-citrulline. ATP-binding residues include Gly-132 and Thr-134. L-aspartate contacts are provided by Thr-134, Asn-138, and Asp-139. Asn-138 provides a ligand contact to L-citrulline. Residue Asp-139 coordinates ATP. Positions 142 and 195 each coordinate L-citrulline. Asp-197 serves as a coordination point for ATP. 3 residues coordinate L-citrulline: Thr-204, Glu-206, and Glu-283.

It belongs to the argininosuccinate synthase family. Type 2 subfamily. As to quaternary structure, homotetramer.

The protein localises to the cytoplasm. The catalysed reaction is L-citrulline + L-aspartate + ATP = 2-(N(omega)-L-arginino)succinate + AMP + diphosphate + H(+). The protein operates within amino-acid biosynthesis; L-arginine biosynthesis; L-arginine from L-ornithine and carbamoyl phosphate: step 2/3. This chain is Argininosuccinate synthase (argG), found in Neisseria meningitidis serogroup A / serotype 4A (strain DSM 15465 / Z2491).